A 349-amino-acid chain; its full sequence is uncharacterized protein (349 aa).

This is an uncharacterized protein from Escherichia coli (strain K12).